Reading from the N-terminus, the 79-residue chain is Dolichyl-diphosphooligosaccharide--protein glycosyltransferase subunit TMEM258 (79 aa).

The next 2 membrane-spanning stretches (helical) occupy residues 17 to 37 (VFPHLTVVLLAIGMFFTAWFF) and 55 to 75 (LISLVASLFMGFGVLFLLLWV).

This sequence belongs to the OST5 family. As to quaternary structure, component of the oligosaccharyltransferase (OST) complex.

It is found in the membrane. Its subcellular location is the endoplasmic reticulum. The protein resides in the cytoplasm. The protein operates within protein modification; protein glycosylation. Functionally, subunit of the oligosaccharyl transferase (OST) complex that catalyzes the initial transfer of a defined glycan (Glc(3)Man(9)GlcNAc(2) in eukaryotes) from the lipid carrier dolichol-pyrophosphate to an asparagine residue within an Asn-X-Ser/Thr consensus motif in nascent polypeptide chains, the first step in protein N-glycosylation. N-glycosylation occurs cotranslationally and the complex associates with the Sec61 complex at the channel-forming translocon complex that mediates protein translocation across the endoplasmic reticulum (ER). All subunits are required for a maximal enzyme activity. This Xenopus laevis (African clawed frog) protein is Dolichyl-diphosphooligosaccharide--protein glycosyltransferase subunit TMEM258.